Consider the following 285-residue polypeptide: Undecaprenyl-diphosphatase (285 aa).

Helical transmembrane passes span 12–34 (IVIAILQGATELFPVSSLGHAVI), 49–69 (IFLPFLVMLHLGTAIALLVYF), 93–113 (IHILALLVVATIPAVIIGGLL), 120–140 (LFGTARYAAIFLFLNGLLLLL), 159–179 (LTYADAAIIGLWQCLAFLPGI), 234–254 (VATIGAMVAAVTALASTAFLM), and 263–283 (WALSPFGYYCVLAGAVSFFIL).

It belongs to the UppP family.

It is found in the cell inner membrane. It carries out the reaction di-trans,octa-cis-undecaprenyl diphosphate + H2O = di-trans,octa-cis-undecaprenyl phosphate + phosphate + H(+). Functionally, catalyzes the dephosphorylation of undecaprenyl diphosphate (UPP). Confers resistance to bacitracin. The chain is Undecaprenyl-diphosphatase from Gluconacetobacter diazotrophicus (strain ATCC 49037 / DSM 5601 / CCUG 37298 / CIP 103539 / LMG 7603 / PAl5).